Reading from the N-terminus, the 224-residue chain is Ribosomal RNA small subunit methyltransferase I (224 aa).

It belongs to the methyltransferase superfamily. RsmI family.

The protein resides in the cytoplasm. It carries out the reaction cytidine(1402) in 16S rRNA + S-adenosyl-L-methionine = 2'-O-methylcytidine(1402) in 16S rRNA + S-adenosyl-L-homocysteine + H(+). Catalyzes the 2'-O-methylation of the ribose of cytidine 1402 (C1402) in 16S rRNA. The protein is Ribosomal RNA small subunit methyltransferase I of Borrelia garinii subsp. bavariensis (strain ATCC BAA-2496 / DSM 23469 / PBi) (Borreliella bavariensis).